Consider the following 268-residue polypeptide: MAIPIRTEKEIVKLREACKLASDVLVMIEPYVKAGVTTGELDRICHEYMVNEQKVIPACLNYHGFPKATCISINEVVCHGIPSDDKVLKNGDIVNIDVTVIKDGYFGDNSKMYIVGGETNIRSKKLVEAAQEALYVGIRTVKPDIRLNEIGKAVQKYTESQTFSVVREYCGHGVGTEFHCEPQVLHYYADDGGVILKPGMVFTIEPMINAGKKEVRVMGDGWTVKTKDRSHSAQYEHQLIVTETGCEVMTIRDEEIAEGRISRIMVNV.

Histidine 79 is a binding site for substrate. A divalent metal cation-binding residues include aspartate 97, aspartate 108, and histidine 172. Histidine 179 is a binding site for substrate. 2 residues coordinate a divalent metal cation: glutamate 205 and glutamate 236.

It belongs to the peptidase M24A family. Methionine aminopeptidase type 1 subfamily. As to quaternary structure, monomer. It depends on Co(2+) as a cofactor. The cofactor is Zn(2+). Mn(2+) serves as cofactor. Fe(2+) is required as a cofactor.

It carries out the reaction Release of N-terminal amino acids, preferentially methionine, from peptides and arylamides.. In terms of biological role, removes the N-terminal methionine from nascent proteins. The N-terminal methionine is often cleaved when the second residue in the primary sequence is small and uncharged (Met-Ala-, Cys, Gly, Pro, Ser, Thr, or Val). Requires deformylation of the N(alpha)-formylated initiator methionine before it can be hydrolyzed. The sequence is that of Methionine aminopeptidase from Haemophilus influenzae (strain ATCC 51907 / DSM 11121 / KW20 / Rd).